The primary structure comprises 478 residues: Cysteine--tRNA ligase (478 aa).

Cys-27 serves as a coordination point for Zn(2+). The 'HIGH' region signature appears at Pro-29–Asn-39. Residues Cys-207, His-232, and Glu-236 each coordinate Zn(2+). A 'KMSKS' region motif is present at residues Lys-264–Ser-268. Lys-267 lines the ATP pocket.

This sequence belongs to the class-I aminoacyl-tRNA synthetase family. In terms of assembly, monomer. Zn(2+) is required as a cofactor.

The protein resides in the cytoplasm. The enzyme catalyses tRNA(Cys) + L-cysteine + ATP = L-cysteinyl-tRNA(Cys) + AMP + diphosphate. The polypeptide is Cysteine--tRNA ligase (Desulforudis audaxviator (strain MP104C)).